Reading from the N-terminus, the 1233-residue chain is ATP-dependent helicase/nuclease subunit A (1233 aa).

A UvrD-like helicase ATP-binding domain is found at 3 to 474; it reads TKWTEEQKQA…ILLYKNFRSR (472 aa). 24-31 serves as a coordination point for ATP; the sequence is AAAGSGKT. A UvrD-like helicase C-terminal domain is found at 518–809; that stretch reads VTGGAVELHL…RIMSIHKSKG (292 aa). The interval 533-555 is disordered; that stretch reads VEEEVEEKEEEKNEEKDFEEEEE.

This sequence belongs to the helicase family. AddA subfamily. Heterodimer of AddA and AddB/RexB. Mg(2+) is required as a cofactor.

The catalysed reaction is Couples ATP hydrolysis with the unwinding of duplex DNA by translocating in the 3'-5' direction.. It catalyses the reaction ATP + H2O = ADP + phosphate + H(+). In terms of biological role, the heterodimer acts as both an ATP-dependent DNA helicase and an ATP-dependent, dual-direction single-stranded exonuclease. Recognizes the chi site generating a DNA molecule suitable for the initiation of homologous recombination. The AddA nuclease domain is required for chi fragment generation; this subunit has the helicase and 3' -&gt; 5' nuclease activities. This is ATP-dependent helicase/nuclease subunit A from Thermoanaerobacter sp. (strain X514).